The chain runs to 163 residues: Nucleotide-binding protein BC_1159 (163 aa).

The protein belongs to the YajQ family.

Its function is as follows. Nucleotide-binding protein. The chain is Nucleotide-binding protein BC_1159 from Bacillus cereus (strain ATCC 14579 / DSM 31 / CCUG 7414 / JCM 2152 / NBRC 15305 / NCIMB 9373 / NCTC 2599 / NRRL B-3711).